Here is a 404-residue protein sequence, read N- to C-terminus: Putative replication protein C (404 aa).

The disordered stretch occupies residues 249–287 (PDQIERHKQNSHPESTNEFEPSSREEQGERPSPAIEPQR).

It to A.rhizogenes possible replication protein C (RepC).

In Sinorhizobium fredii (strain NBRC 101917 / NGR234), this protein is Putative replication protein C.